Consider the following 187-residue polypeptide: Ribosome-recycling factor (187 aa).

The protein belongs to the RRF family.

It is found in the cytoplasm. Responsible for the release of ribosomes from messenger RNA at the termination of protein biosynthesis. May increase the efficiency of translation by recycling ribosomes from one round of translation to another. This is Ribosome-recycling factor from Petrotoga mobilis (strain DSM 10674 / SJ95).